Reading from the N-terminus, the 452-residue chain is Bifunctional protein GlmU (452 aa).

The segment at M1 to K232 is pyrophosphorylase. Residues L11–G14, K25, Q78, and G83–T84 contribute to the UDP-N-acetyl-alpha-D-glucosamine site. D108 contributes to the Mg(2+) binding site. Residues G144, E158, N173, and N230 each coordinate UDP-N-acetyl-alpha-D-glucosamine. N230 lines the Mg(2+) pocket. The tract at residues A233–A253 is linker. Residues G254–G452 are N-acetyltransferase. UDP-N-acetyl-alpha-D-glucosamine is bound by residues R319 and K337. H349 acts as the Proton acceptor in catalysis. Positions 352 and 363 each coordinate UDP-N-acetyl-alpha-D-glucosamine. Residues A366, N372–Y373, S391, S409, and R426 each bind acetyl-CoA.

The protein in the N-terminal section; belongs to the N-acetylglucosamine-1-phosphate uridyltransferase family. It in the C-terminal section; belongs to the transferase hexapeptide repeat family. Homotrimer. Requires Mg(2+) as cofactor.

The protein localises to the cytoplasm. It catalyses the reaction alpha-D-glucosamine 1-phosphate + acetyl-CoA = N-acetyl-alpha-D-glucosamine 1-phosphate + CoA + H(+). The enzyme catalyses N-acetyl-alpha-D-glucosamine 1-phosphate + UTP + H(+) = UDP-N-acetyl-alpha-D-glucosamine + diphosphate. It functions in the pathway nucleotide-sugar biosynthesis; UDP-N-acetyl-alpha-D-glucosamine biosynthesis; N-acetyl-alpha-D-glucosamine 1-phosphate from alpha-D-glucosamine 6-phosphate (route II): step 2/2. The protein operates within nucleotide-sugar biosynthesis; UDP-N-acetyl-alpha-D-glucosamine biosynthesis; UDP-N-acetyl-alpha-D-glucosamine from N-acetyl-alpha-D-glucosamine 1-phosphate: step 1/1. It participates in bacterial outer membrane biogenesis; LPS lipid A biosynthesis. In terms of biological role, catalyzes the last two sequential reactions in the de novo biosynthetic pathway for UDP-N-acetylglucosamine (UDP-GlcNAc). The C-terminal domain catalyzes the transfer of acetyl group from acetyl coenzyme A to glucosamine-1-phosphate (GlcN-1-P) to produce N-acetylglucosamine-1-phosphate (GlcNAc-1-P), which is converted into UDP-GlcNAc by the transfer of uridine 5-monophosphate (from uridine 5-triphosphate), a reaction catalyzed by the N-terminal domain. This Nitrobacter hamburgensis (strain DSM 10229 / NCIMB 13809 / X14) protein is Bifunctional protein GlmU.